A 37-amino-acid chain; its full sequence is MKVRPSVKVICEKCKIIRRKGRVMVICQNPKHKQRQG.

The protein belongs to the bacterial ribosomal protein bL36 family.

The polypeptide is Large ribosomal subunit protein bL36 (Acetivibrio thermocellus (strain ATCC 27405 / DSM 1237 / JCM 9322 / NBRC 103400 / NCIMB 10682 / NRRL B-4536 / VPI 7372) (Clostridium thermocellum)).